A 186-amino-acid chain; its full sequence is uncharacterized protein (186 aa).

This is an uncharacterized protein from Acanthamoeba polyphaga (Amoeba).